The primary structure comprises 367 residues: MISVVVVDDSAFMRKALSTMLEKDPEIRVVATARDGEEGLQVIRQHNPDVVTLDIEMPRMDGLTTLRHIMMEMPRPVLMVSSLTTEGAEATLKALELGAVDFIPKQLSKVSLDIVRIENDLREKVKEVSKRRMLRTPRPVRPAPTASAPAQTAQVASAAPATAPSRPAMPATRASRPVRDVVAIGVSTGGPPAVQKVLSQLPADFPASILIAQHMPAAFTGPFAKRLDGVCAISVKEAESGEKLKPGTAYIAPGGKHLRVEQRVSHMEVVVTTDPADALYKPSANVLMESVGQSMGRRALGVILTGMGSDGMEGMKVLKQKGGRSIAQSDATCVVYGMPKAIVDAGLADEIVDIDDMAAAIMNGLYK.

The Response regulatory domain maps to 3-120 (SVVVVDDSAF…SLDIVRIEND (118 aa)). The residue at position 54 (D54) is a 4-aspartylphosphate. Residues 132–174 (RMLRTPRPVRPAPTASAPAQTAQVASAAPATAPSRPAMPATRA) are disordered. A compositionally biased stretch (low complexity) spans 143-174 (APTASAPAQTAQVASAAPATAPSRPAMPATRA). In terms of domain architecture, CheB-type methylesterase spans 175 to 367 (SRPVRDVVAI…AAAIMNGLYK (193 aa)). Catalysis depends on residues S187, H214, and D310.

The protein belongs to the CheB family. Post-translationally, phosphorylated by CheA. Phosphorylation of the N-terminal regulatory domain activates the methylesterase activity.

It is found in the cytoplasm. It carries out the reaction [protein]-L-glutamate 5-O-methyl ester + H2O = L-glutamyl-[protein] + methanol + H(+). The enzyme catalyses L-glutaminyl-[protein] + H2O = L-glutamyl-[protein] + NH4(+). Involved in chemotaxis. Part of a chemotaxis signal transduction system that modulates chemotaxis in response to various stimuli. Catalyzes the demethylation of specific methylglutamate residues introduced into the chemoreceptors (methyl-accepting chemotaxis proteins or MCP) by CheR. Also mediates the irreversible deamidation of specific glutamine residues to glutamic acid. The polypeptide is Protein-glutamate methylesterase/protein-glutamine glutaminase 2 (Nitratidesulfovibrio vulgaris (strain ATCC 29579 / DSM 644 / CCUG 34227 / NCIMB 8303 / VKM B-1760 / Hildenborough) (Desulfovibrio vulgaris)).